The primary structure comprises 589 residues: Aspartate--tRNA ligase (589 aa).

E172 serves as a coordination point for L-aspartate. The interval 196-199 is aspartate; the sequence is QLFK. R218 provides a ligand contact to L-aspartate. Residues 218 to 220 and Q227 contribute to the ATP site; that span reads RDE. H449 contributes to the L-aspartate binding site. E483 provides a ligand contact to ATP. Residue R490 coordinates L-aspartate. An ATP-binding site is contributed by 535-538; it reads GLDR.

It belongs to the class-II aminoacyl-tRNA synthetase family. Type 1 subfamily. As to quaternary structure, homodimer.

The protein resides in the cytoplasm. The enzyme catalyses tRNA(Asp) + L-aspartate + ATP = L-aspartyl-tRNA(Asp) + AMP + diphosphate. Catalyzes the attachment of L-aspartate to tRNA(Asp) in a two-step reaction: L-aspartate is first activated by ATP to form Asp-AMP and then transferred to the acceptor end of tRNA(Asp). This Haemophilus ducreyi (strain 35000HP / ATCC 700724) protein is Aspartate--tRNA ligase.